Consider the following 592-residue polypeptide: Arginine--tRNA ligase (592 aa).

The 'HIGH' region motif lies at Ala131–His141.

It belongs to the class-I aminoacyl-tRNA synthetase family. In terms of assembly, monomer.

It localises to the cytoplasm. The enzyme catalyses tRNA(Arg) + L-arginine + ATP = L-arginyl-tRNA(Arg) + AMP + diphosphate. The polypeptide is Arginine--tRNA ligase (Rhodospirillum rubrum (strain ATCC 11170 / ATH 1.1.1 / DSM 467 / LMG 4362 / NCIMB 8255 / S1)).